A 93-amino-acid chain; its full sequence is Small ribosomal subunit protein uS15 (93 aa).

The protein belongs to the universal ribosomal protein uS15 family. Part of the 30S ribosomal subunit. Forms a bridge to the 50S subunit in the 70S ribosome, contacting the 23S rRNA.

Functionally, one of the primary rRNA binding proteins, it binds directly to 16S rRNA where it helps nucleate assembly of the platform of the 30S subunit by binding and bridging several RNA helices of the 16S rRNA. In terms of biological role, forms an intersubunit bridge (bridge B4) with the 23S rRNA of the 50S subunit in the ribosome. This is Small ribosomal subunit protein uS15 from Ehrlichia canis (strain Jake).